Consider the following 215-residue polypeptide: MKALLLGAPGAGKGTQAQFITAAFGIPQISTGDMLRAAIKAGTPLGLEAKKIIDEGGLVRDDIIIGMVKERIAQDDCKNGFLFDGFPRTLAQAEAMVEAGVDLDAVVEIDVPDSVIVDRMSGRRVHLASGRTYHVTYNPPKVEGKDDVTGEDLIQRDDDKEETVKKRLAVYHEQTEVLVDFYSKLEGEHAPKYIKVDGTQPVEAVKAEVLGALGK.

10-15 (GAGKGT) contributes to the ATP binding site. The interval 30–59 (STGDMLRAAIKAGTPLGLEAKKIIDEGGLV) is NMP. Residues threonine 31, arginine 36, 57–59 (GLV), 85–88 (GFPR), and glutamine 92 each bind AMP. Positions 122-159 (GRRVHLASGRTYHVTYNPPKVEGKDDVTGEDLIQRDDD) are LID. ATP-binding positions include arginine 123 and 132–133 (TY). The AMP site is built by arginine 156 and arginine 167. Glutamine 200 is a binding site for ATP.

Belongs to the adenylate kinase family. Monomer.

It localises to the cytoplasm. The catalysed reaction is AMP + ATP = 2 ADP. The protein operates within purine metabolism; AMP biosynthesis via salvage pathway; AMP from ADP: step 1/1. Catalyzes the reversible transfer of the terminal phosphate group between ATP and AMP. Plays an important role in cellular energy homeostasis and in adenine nucleotide metabolism. This chain is Adenylate kinase, found in Neisseria meningitidis serogroup C (strain 053442).